The sequence spans 500 residues: FAD-linked oxidoreductase srdI (500 aa).

An N-terminal signal peptide occupies residues 1–20 (MHLSSSLLFTSALLAGGINA). Asn-47 is a glycosylation site (N-linked (GlcNAc...) asparagine). The 173-residue stretch at 69–241 (YRPPSYQAAI…TQATYKMHKS (173 aa)) folds into the FAD-binding PCMH-type domain. N-linked (GlcNAc...) asparagine glycosylation is found at Asn-257 and Asn-282.

This sequence belongs to the oxygen-dependent FAD-linked oxidoreductase family. The cofactor is FAD.

Its function is as follows. FAD-linked oxidoreductase; part of the gene cluster that mediates the biosynthesis of sordarial, a salicylic aldehyde structurally related to the phytotoxin pyriculol. The most interesting aspect of this pathway is formation of an aromatic product from the highly reducing polyketide synthase srdA. SrdA synthesizes a reduced polyketide chain from one molecule of acetyl-CoA and five molecules of malonyl-CoA. The polyketide chain is then reductively released as an aldehyde. The oxidoreductases srdC, srdD and srdE then oxidize one of the hydroxy groups to facilitate the intramolecular aldol condensation, followed by dehydration to yield a salicylic aldehyde. This aldehyde can undergo facile reduction by endogenous reductases to yield the alcohol 1-hydroxy-2-hydroxymethyl-3-pent-1,3-dienylbenzene. The flavin-dependent srdI counteract against the propensity of the aldehydes to be reduced under physiological conditions and is responsible for reoxidizing 1-hydroxy-2-hydroxymethyl-3-pent-1,3-dienylbenzene back to the salicylic aldehyde. This salicylic aldehyde is then selectively epoxidized by the cupin-domain-containing oxidoreductase srdB to yield the epoxide, which can be hydrolyzed stereoselectively by the hydrolase srdG to give the final product sordarial. This Neurospora crassa (strain ATCC 24698 / 74-OR23-1A / CBS 708.71 / DSM 1257 / FGSC 987) protein is FAD-linked oxidoreductase srdI.